Consider the following 155-residue polypeptide: Effector protein PevD1 (155 aa).

Positions 1-18 are cleaved as a signal peptide; the sequence is MQFTLAAAAALFGASALA. An AA1-like domain is found at 33-148; the sequence is NMYENIDIAD…NPTTIVIDSL (116 aa). 2 disulfide bridges follow: Cys-70–Cys-84 and Cys-125–Cys-135.

Monomer. Interacts with Arabidopsis thaliana NRP.

The protein resides in the secreted. Its function is as follows. Effector protein. Elicits a hypersensitive response (HR) in tobacco plants (N.tabacum) and cotton (G.hirsutum). Boosts systemic acquired resistance (SAR) to tobacco mosaic virus (TMV) infection in N.tabacum and to V.dhaliae infection in primed cotton seedlings. The sequence is that of Effector protein PevD1 from Verticillium dahliae (Verticillium wilt).